The chain runs to 999 residues: Disks large-associated protein 1 (999 aa).

Disordered regions lie at residues 155–213 (HSLE…GYWS), 395–418 (MAED…ARRA), and 918–989 (NWRP…DSIE). Basic and acidic residues predominate over residues 194-204 (RERCKSAEPKN). 2 stretches are compositionally biased toward basic and acidic residues: residues 923–932 (DPPERKERRL) and 947–965 (LARD…EARK). Residues 976 to 985 (VRQNSATESA) show a composition bias toward polar residues. Residues 997–999 (TRL) carry the PDZ-binding motif.

It belongs to the SAPAP family.

It localises to the cell membrane. It is found in the postsynaptic density. Its subcellular location is the synapse. Part of the postsynaptic scaffold in neuronal cells. This Danio rerio (Zebrafish) protein is Disks large-associated protein 1.